Here is a 442-residue protein sequence, read N- to C-terminus: GTPase Der (442 aa).

EngA-type G domains lie at 2-167 and 175-351; these read RTIA…PIQN and FKFC…EQAM. Residues 8-15, 55-59, 119-122, 181-188, 228-232, and 293-296 contribute to the GTP site; these read GKPNVGKS, DTGGI, NKVE, GRPNVGKS, DTAGV, and NKWD. The region spanning 352 to 436 is the KH-like domain; sequence RKVATSLLND…PITLYWQDKN (85 aa).

The protein belongs to the TRAFAC class TrmE-Era-EngA-EngB-Septin-like GTPase superfamily. EngA (Der) GTPase family. Associates with the 50S ribosomal subunit.

Its function is as follows. GTPase that plays an essential role in the late steps of ribosome biogenesis. This chain is GTPase Der, found in Ureaplasma urealyticum serovar 10 (strain ATCC 33699 / Western).